We begin with the raw amino-acid sequence, 615 residues long: Sodium-dependent neutral amino acid transporter B(0)AT3 (615 aa).

At 1–26 the chain is on the cytoplasmic side; the sequence is MAQASGMDPLVDIEDERPKWDNKLQY. The chain crosses the membrane as a helical span at residues 27-47; it reads LLSCIGFAVGLGNIWRFPYLC. At 48 to 52 the chain is on the extracellular side; the sequence is HTHGG. Residues 53–73 traverse the membrane as a helical segment; that stretch reads GAFLIPYFIALVFEGIPLFYI. Over 74 to 105 the chain is Cytoplasmic; sequence ELAIGQRLRRGSIGVWKTISPYLGGVGLGCFS. A helical membrane pass occupies residues 106-126; it reads VSFLVSLYYNTILLWVLWFFL. Residues 127-177 lie on the Extracellular side of the membrane; the sequence is NSFQHPLPWSTCPLDLNRTGFVQECQSSGTVSYFWYRQTLNITSDISNTGT. Residues N143 and N167 are each glycosylated (N-linked (GlcNAc...) asparagine). A helical transmembrane segment spans residues 178-198; that stretch reads IQWKLFLCLVACWTTVYLCVI. At 199 to 206 the chain is on the cytoplasmic side; sequence RGIESTGK. Residues 207-227 traverse the membrane as a helical segment; sequence VIYFTALFPYLVLTIFLIRGL. Residues 228 to 255 are Extracellular-facing; the sequence is TLPGATEGLTYLFTPNMKILQNSRVWLD. A helical membrane pass occupies residues 256–276; that stretch reads AATQIFFSLSLAFGGHIAFAS. Residues 277–290 are Cytoplasmic-facing; that stretch reads YNQPRNNCEKDAVT. The helical transmembrane segment at 291–311 threads the bilayer; that stretch reads IALVNSMTSLYASITIFSIMG. The Extracellular segment spans residues 312 to 397; that stretch reads FKASNDYGRC…FTEAVLHMPG (86 aa). Residue N353 is glycosylated (N-linked (GlcNAc...) asparagine). The chain crosses the membrane as a helical span at residues 398–418; it reads ASVWSVLFFGMLFTLGLSSMF. The Cytoplasmic portion of the chain corresponds to 419–442; that stretch reads GNMEGVITPLFDMGILPKGVPKET. The helical transmembrane segment at 443–463 threads the bilayer; sequence MTGVVCFICFLSAICFTLQSG. The Extracellular segment spans residues 464–472; it reads SYWLEIFDS. Residues 473–493 traverse the membrane as a helical segment; that stretch reads FAASLNLIIFAFMEVVGVIHV. At 494–520 the chain is on the cytoplasmic side; the sequence is YGIKRFCDDIEWMTGRRPSLYWQVTWR. The chain crosses the membrane as a helical span at residues 521–541; sequence VVSPMLLFGIFLSYIVLLAQS. The Extracellular portion of the chain corresponds to 542-571; the sequence is SPSYKAWNPQYEHFPSREEKLYPGWVQVTC. Residues 572-592 form a helical membrane-spanning segment; it reads VLLSFLPSLWVPGIALAQLLF. The Cytoplasmic segment spans residues 593-615; the sequence is QYRQRWKNTHLESALKPQESRGC.

The protein belongs to the sodium:neurotransmitter symporter (SNF) (TC 2.A.22) family. SLC6A18 subfamily. As to quaternary structure, interacts with CLTRN; this interaction regulates the trafficking of SLC6A18 to the cell membrane and its activity. As to expression, kidney-specific expression.

Its subcellular location is the apical cell membrane. It localises to the cell membrane. It catalyses the reaction L-alanine(out) + chloride(out) + 2 Na(+)(out) = L-alanine(in) + chloride(in) + 2 Na(+)(in). It carries out the reaction glycine(out) + chloride(out) + 2 Na(+)(out) = glycine(in) + chloride(in) + 2 Na(+)(in). The enzyme catalyses L-methionine(out) + chloride(out) + 2 Na(+)(out) = L-methionine(in) + chloride(in) + 2 Na(+)(in). The catalysed reaction is L-valine(out) + chloride(out) + 2 Na(+)(out) = L-valine(in) + chloride(in) + 2 Na(+)(in). It catalyses the reaction L-isoleucine(out) + chloride(out) + 2 Na(+)(out) = L-isoleucine(in) + chloride(in) + 2 Na(+)(in). It carries out the reaction L-serine(out) + chloride(out) + 2 Na(+)(out) = L-serine(in) + chloride(in) + 2 Na(+)(in). The enzyme catalyses L-leucine(out) + chloride(out) + 2 Na(+)(out) = L-leucine(in) + chloride(in) + 2 Na(+)(in). Symporter that transports one amino acid molecule together with two sodium and one chloride ions in kidneys and plays a role in the neutral amino acids reabsorption. Preferentially transports neutral amino acids such as L-glycine and L-alanine but also other neutral amino acids. Required CLTRN for cell surface expression and for its amino acid transporter activity. The transport mechanism is pH-independent. This is Sodium-dependent neutral amino acid transporter B(0)AT3 from Rattus norvegicus (Rat).